An 803-amino-acid chain; its full sequence is Isoamylase 1, chloroplastic (803 aa).

Residues 1-54 (MASLPHCLSARPLVVAAAPGRPGPGPGPWLRGGARRRNAAFSAGNAGRRVGLRR) constitute a chloroplast transit peptide. The active-site Nucleophile is Asp432. Residue Glu488 is the Proton donor of the active site.

It belongs to the glycosyl hydrolase 13 family. Forms a homo-pentamer and a hetero-hexamer composed of five ISA1 and one ISA2. Interacts with FLO6/SIP4. In terms of tissue distribution, highly expressed in developing endosperm. Expressed at low levels in leaves.

The protein resides in the plastid. It localises to the chloroplast. It catalyses the reaction Hydrolysis of (1-&gt;6)-alpha-D-glucosidic branch linkages in glycogen, amylopectin and their beta-limit dextrins.. It functions in the pathway glycan biosynthesis; starch biosynthesis. Its activity is regulated as follows. Inhibited by copper chloride, mercury chloride, ammonium molybdate and para-chloromercuribenzoate. Its function is as follows. Starch-debranching enzyme involved in amylopectin biosynthesis in endosperm. Functions by removing excess branches or improper branches that interfere with the formation of double helices of the cluster chains of amylopectin and crystallization of starch. Works as ISA1 homooligomer or together with ISA2 as heterooligomer. The heterooligomer ISA1 and ISA2 possesses higher affinity than the ISA1 homooligomer for various branched polyglucans in vitro, but no marked differences exist in chain preferences for debranching of amylopectin and phytoglycogen between these forms. This chain is Isoamylase 1, chloroplastic, found in Oryza sativa subsp. japonica (Rice).